The sequence spans 366 residues: Structure-specific endonuclease subunit SLX1 (366 aa).

Residues 14–95 (AFYCCYLLRS…QNTHATRHID (82 aa)) form the GIY-YIG domain. Disordered stretches follow at residues 31 to 59 (IGSTPNPARRLGQHNGSSKGGAKRTSMQG) and 102 to 124 (RAEELQKGKKKATSPGRRRKRPP). A compositionally biased stretch (basic residues) spans 109 to 123 (GKKKATSPGRRRKRP). The SLX1-type zinc finger occupies 234–289 (CGVCKNPADMSSSLILVCPIEACQTVSHLSCLSNKFLTEGGELETLVPLEGTCPGC). Residues 317–366 (KPKRKRKSDNPAESDAADGQALEQEDEELDETWMEDMSQDEEPSPVKKSR) form a disordered region. A compositionally biased stretch (acidic residues) spans 339 to 359 (EQEDEELDETWMEDMSQDEEP).

The protein belongs to the SLX1 family. In terms of assembly, forms a heterodimer with SLX4. A divalent metal cation serves as cofactor.

The protein resides in the nucleus. Catalytic subunit of the SLX1-SLX4 structure-specific endonuclease that resolves DNA secondary structures generated during DNA repair and recombination. Has endonuclease activity towards branched DNA substrates, introducing single-strand cuts in duplex DNA close to junctions with ss-DNA. This Phaeosphaeria nodorum (strain SN15 / ATCC MYA-4574 / FGSC 10173) (Glume blotch fungus) protein is Structure-specific endonuclease subunit SLX1.